The chain runs to 312 residues: DNA-directed RNA polymerase subunit alpha (312 aa).

An alpha N-terminal domain (alpha-NTD) region spans residues 1 to 226 (MIEFEKPKIT…DHLNLFVDLS (226 aa)). The alpha C-terminal domain (alpha-CTD) stretch occupies residues 243–312 (TERVLDKIIE…ELGLSLKKRK (70 aa)).

This sequence belongs to the RNA polymerase alpha chain family. As to quaternary structure, homodimer. The RNAP catalytic core consists of 2 alpha, 1 beta, 1 beta' and 1 omega subunit. When a sigma factor is associated with the core the holoenzyme is formed, which can initiate transcription.

The enzyme catalyses RNA(n) + a ribonucleoside 5'-triphosphate = RNA(n+1) + diphosphate. Functionally, DNA-dependent RNA polymerase catalyzes the transcription of DNA into RNA using the four ribonucleoside triphosphates as substrates. The sequence is that of DNA-directed RNA polymerase subunit alpha from Lactococcus lactis subsp. cremoris (strain MG1363).